A 118-amino-acid chain; its full sequence is T cell receptor gamma variable 4 (118 aa).

An N-terminal signal peptide occupies residues 1–17 (MQWALAVLLAFLSPASQ). The region spanning 18–118 (KSSNLEGRTK…GVYYCATWDG (101 aa)) is the Ig-like domain. C41 and C113 are joined by a disulfide. N-linked (GlcNAc...) asparagine glycosylation occurs at N106.

As to quaternary structure, gamma-delta TR is a heterodimer composed of a gamma and delta chain; disulfide-linked. The gamma-delta TR is associated with the transmembrane signaling CD3 coreceptor proteins following the stoichiometry: a single gamma-delta TR heterodimer associates with one CD3D-CD3E heterodimer, one CD3G-CD3E heterodimer and one CD247 homodimer forming a stable octameric structure. Upon activation, gamma-delta TR complex associates with FCER1G to initiate intracellular signaling.

It is found in the cell membrane. Its function is as follows. V region of the variable domain of T cell receptor (TR) gamma chain that participates in the antigen recognition. Gamma-delta TRs recognize a variety of self and foreign non-peptide antigens frequently expressed at the epithelial boundaries between the host and external environment, including endogenous lipids presented by MH-like protein CD1D and phosphoantigens presented by butyrophilin-like molecule BTN3A1. Upon antigen recognition induces rapid, innate-like immune responses involved in pathogen clearance and tissue repair. Binding of gamma-delta TR complex to antigen triggers phosphorylation of immunoreceptor tyrosine-based activation motifs (ITAMs) in the CD3 chains by the LCK and FYN kinases, allowing the recruitment, phosphorylation, and activation of ZAP70 that facilitates phosphorylation of the scaffolding proteins LCP2 and LAT. This lead to the formation of a supramolecular signalosome that recruits the phospholipase PLCG1, resulting in calcium mobilization and ERK activation, ultimately leading to T cell expansion and differentiation into effector cells. Gamma-delta TRs are produced through somatic rearrangement of a limited repertoire of variable (V), diversity (D), and joining (J) genes. The potential diversity of gamma-delta TRs is conferred by the unique ability to rearrange (D) genes in tandem and to utilize all three reading frames. The combinatorial diversity is considerably increased by the sequence exonuclease trimming and random nucleotide (N) region additions which occur during the V-(D)-J rearrangements. The polypeptide is T cell receptor gamma variable 4 (Homo sapiens (Human)).